A 290-amino-acid chain; its full sequence is Probable aquaporin PIP2-7 (290 aa).

A run of 2 helical transmembrane segments spans residues 45–65 (ALIAEFMATLIFLYVSIATVI) and 79–99 (GVGYLGVAWSFGATIFVLVYC). Residues 109–111 (NPA) carry the NPA 1 motif. 3 helical membrane-spanning segments follow: residues 128 to 148 (VLYVVAQCLGAIAGAGIVKGI), 168 to 188 (SAAGALGAEIVGTFILVYTVF), and 202 to 222 (IPVLVPLPIGFAVFVVHLATI). The short motif at 230–232 (NPA) is the NPA 2 element. The helical transmembrane segment at 252 to 272 (IFWVGPVIGAFLAAAYHKLVL) threads the bilayer.

This sequence belongs to the MIP/aquaporin (TC 1.A.8) family. PIP (TC 1.A.8.11) subfamily. As to expression, expressed in roots.

It is found in the cell membrane. Functionally, aquaporins facilitate the transport of water and small neutral solutes across cell membranes. The chain is Probable aquaporin PIP2-7 (PIP2-7) from Oryza sativa subsp. japonica (Rice).